The sequence spans 404 residues: Cystinosin homolog (404 aa).

The Lumenal portion of the chain corresponds to 20 to 123 (TNNLVVRQKE…FARITVIRSH (104 aa)). N-linked (GlcNAc...) asparagine glycosylation is found at asparagine 46, asparagine 53, asparagine 79, and asparagine 97. The helical transmembrane segment at 124–144 (FLAILIQIVGWTYFFAWSISF) threads the bilayer. A PQ-loop 1 domain is found at 125–191 (LAILIQIVGW…MYYNSHVKNE (67 aa)). Topologically, residues 145-163 (YPQMYLNFKRKSVVGLNFD) are cytoplasmic. A helical transmembrane segment spans residues 164–184 (FLSLNLVGFCAYAIFNLLMYY). The Lumenal portion of the chain corresponds to 185 to 207 (NSHVKNEYNIVNPRSPPPVLLND). Residues 208–228 (VVFAVHAFLACFITILQCLFY) traverse the membrane as a helical segment. Residues 229-238 (ERDNQSVSSK) lie on the Cytoplasmic side of the membrane. The chain crosses the membrane as a helical span at residues 239-259 (CIALMIVLISFGFCSAAATVL). Over 260 to 263 (RKIQ) the chain is Lumenal. A helical membrane pass occupies residues 264–285 (LLSFVTSLSYIKMAVTCCKYFP). The PQ-loop 2 domain maps to 266–327 (SFVTSLSYIK…MILQAVNVND (62 aa)). Topologically, residues 286–295 (QAYFNYTRKS) are cytoplasmic. The helical transmembrane segment at 296-316 (TVGWSIGNIMLDFTGGTLDIL) threads the bilayer. The Lumenal segment spans residues 317 to 337 (QMILQAVNVNDWSAFYANPVK). Residues 338–358 (FGLGFVSIFFDIIFMVQHYVL) form a helical membrane-spanning segment. At 359-404 (YPNAEVPHNEYHGVDNPNPDNIARDAEQYAGDSESMESTEPIIVHD) the chain is on the cytoplasmic side.

This sequence belongs to the cystinosin family.

The protein localises to the lysosome membrane. The protein resides in the cytoplasmic vesicle. It localises to the phagosome. The catalysed reaction is L-cystine(out) + H(+)(out) = L-cystine(in) + H(+)(in). Functionally, cystine/H(+) symporter that mediates export of cystine, the oxidized dimer of cysteine, from lysosomes. May play a role in the degradation of engulfed apoptotic cells. The chain is Cystinosin homolog (ctns-1) from Caenorhabditis elegans.